The primary structure comprises 418 residues: Translation initiation factor 2 subunit gamma (418 aa).

Positions 7–206 constitute a tr-type G domain; it reads QPEVNIGVVG…GIQKYIPTPQ (200 aa). A G1 region spans residues 16–23; sequence GHVDHGKT. Positions 19, 23, 44, and 46 each coordinate Mg(2+). 19-24 lines the GTP pocket; the sequence is DHGKTT. A G2 region spans residues 44–48; that stretch reads GMTIK. Zn(2+) is bound by residues Cys-59, Cys-62, Cys-74, and Cys-77. The G3 stretch occupies residues 93–96; the sequence is DAPG. GTP is bound by residues 149–152 and 184–186; these read NKVD and SAL. The G4 stretch occupies residues 149 to 152; that stretch reads NKVD. The interval 184–186 is G5; sequence SAL.

The protein belongs to the TRAFAC class translation factor GTPase superfamily. Classic translation factor GTPase family. EIF2G subfamily. Heterotrimer composed of an alpha, a beta and a gamma chain. Mg(2+) is required as a cofactor.

The enzyme catalyses GTP + H2O = GDP + phosphate + H(+). Its function is as follows. eIF-2 functions in the early steps of protein synthesis by forming a ternary complex with GTP and initiator tRNA. The protein is Translation initiation factor 2 subunit gamma of Sulfurisphaera tokodaii (strain DSM 16993 / JCM 10545 / NBRC 100140 / 7) (Sulfolobus tokodaii).